A 535-amino-acid chain; its full sequence is GMP synthase [glutamine-hydrolyzing] (535 aa).

One can recognise a Glutamine amidotransferase type-1 domain in the interval 4–210 (KILILDFGSQ…VHEICHCKPD (207 aa)). The active-site Nucleophile is the C85. Catalysis depends on residues H184 and E186. The GMPS ATP-PPase domain maps to 211 to 403 (WVMGDYIAEA…LGLPREMVYR (193 aa)). 238–244 (SGGVDSS) provides a ligand contact to ATP.

In terms of assembly, homodimer.

The enzyme catalyses XMP + L-glutamine + ATP + H2O = GMP + L-glutamate + AMP + diphosphate + 2 H(+). The protein operates within purine metabolism; GMP biosynthesis; GMP from XMP (L-Gln route): step 1/1. In terms of biological role, catalyzes the synthesis of GMP from XMP. The chain is GMP synthase [glutamine-hydrolyzing] from Polynucleobacter asymbioticus (strain DSM 18221 / CIP 109841 / QLW-P1DMWA-1) (Polynucleobacter necessarius subsp. asymbioticus).